The chain runs to 394 residues: Chorismate synthase (394 aa).

Residues Arg42 and Arg48 each coordinate NADP(+). FMN-binding positions include 137-139 (RAS), 258-259 (QA), Gly302, 317-321 (KPIAT), and Arg343.

Belongs to the chorismate synthase family. In terms of assembly, homotetramer. It depends on FMNH2 as a cofactor.

The enzyme catalyses 5-O-(1-carboxyvinyl)-3-phosphoshikimate = chorismate + phosphate. The protein operates within metabolic intermediate biosynthesis; chorismate biosynthesis; chorismate from D-erythrose 4-phosphate and phosphoenolpyruvate: step 7/7. Catalyzes the anti-1,4-elimination of the C-3 phosphate and the C-6 proR hydrogen from 5-enolpyruvylshikimate-3-phosphate (EPSP) to yield chorismate, which is the branch point compound that serves as the starting substrate for the three terminal pathways of aromatic amino acid biosynthesis. This reaction introduces a second double bond into the aromatic ring system. The protein is Chorismate synthase of Streptomyces coelicolor (strain ATCC BAA-471 / A3(2) / M145).